Reading from the N-terminus, the 249-residue chain is Caffeoyl-CoA O-methyltransferase 1 (249 aa).

Lys23 lines the substrate pocket. Residues Thr65, Glu87, 89–90 (GV), Ser95, Asp113, and Ala142 each bind S-adenosyl-L-methionine. A substrate-binding site is contributed by Asp165. An a divalent metal cation-binding site is contributed by Asp165. Asp167 provides a ligand contact to S-adenosyl-L-methionine. Positions 191 and 192 each coordinate a divalent metal cation. Substrate is bound at residue Asn196.

This sequence belongs to the class I-like SAM-binding methyltransferase superfamily. Cation-dependent O-methyltransferase family. CCoAMT subfamily. Requires a divalent metal cation as cofactor. As to expression, mostly expressed in petal limbs and tubes, and, at low levels, in flower buds, stamens, pistils, stems, roots and leaves.

It localises to the cytoplasm. The protein resides in the cytosol. It catalyses the reaction (E)-caffeoyl-CoA + S-adenosyl-L-methionine = (E)-feruloyl-CoA + S-adenosyl-L-homocysteine + H(+). The catalysed reaction is (E)-5-hydroxyferuloyl-CoA + S-adenosyl-L-methionine = (E)-sinapoyl-CoA + S-adenosyl-L-homocysteine + H(+). It functions in the pathway aromatic compound metabolism; phenylpropanoid biosynthesis. Involved in the production of floral volatile phenylpropanoids in flowers of fragrant cultivars (e.g. cv. Mitchell and cv. V26) from cinnamic acid, a common precursor with the anthocyanin biosynthesis pathway involved in flower pigmentation. Methylates caffeoyl-CoA to feruloyl-CoA, also able to methylate 5-hydroxyferuloyl-CoA. The polypeptide is Caffeoyl-CoA O-methyltransferase 1 (Petunia hybrida (Petunia)).